The primary structure comprises 328 residues: UPF0324 membrane protein AF_1621 (328 aa).

A run of 11 helical transmembrane segments spans residues 21–39 (LQML…IINL), 43–60 (ALEP…AGNL), 73–95 (YVPF…PYLG), 101–123 (IVAA…SSRL), 130–152 (SILL…SPLI), 162–184 (AIMI…AHYA), 191–213 (FAVL…QLFG), 223–240 (GIRI…SIIY), 245–267 (FYVP…YLPG), 271–293 (QALR…YTVN), and 305–327 (LFAS…GSGA).

This sequence belongs to the UPF0324 family.

It localises to the cell membrane. The chain is UPF0324 membrane protein AF_1621 from Archaeoglobus fulgidus (strain ATCC 49558 / DSM 4304 / JCM 9628 / NBRC 100126 / VC-16).